Reading from the N-terminus, the 99-residue chain is Aspartyl/glutamyl-tRNA(Asn/Gln) amidotransferase subunit C (99 aa).

The protein belongs to the GatC family. In terms of assembly, heterotrimer of A, B and C subunits.

The enzyme catalyses L-glutamyl-tRNA(Gln) + L-glutamine + ATP + H2O = L-glutaminyl-tRNA(Gln) + L-glutamate + ADP + phosphate + H(+). It catalyses the reaction L-aspartyl-tRNA(Asn) + L-glutamine + ATP + H2O = L-asparaginyl-tRNA(Asn) + L-glutamate + ADP + phosphate + 2 H(+). Allows the formation of correctly charged Asn-tRNA(Asn) or Gln-tRNA(Gln) through the transamidation of misacylated Asp-tRNA(Asn) or Glu-tRNA(Gln) in organisms which lack either or both of asparaginyl-tRNA or glutaminyl-tRNA synthetases. The reaction takes place in the presence of glutamine and ATP through an activated phospho-Asp-tRNA(Asn) or phospho-Glu-tRNA(Gln). The sequence is that of Aspartyl/glutamyl-tRNA(Asn/Gln) amidotransferase subunit C from Delftia acidovorans (strain DSM 14801 / SPH-1).